The following is a 338-amino-acid chain: UDP-glucose 4-epimerase (338 aa).

NAD(+)-binding positions include 11 to 12 (YI), 31 to 36 (DNLCNS), 58 to 59 (DI), 80 to 84 (FAGLK), Asn99, Ser124, Tyr149, Lys153, and Phe178. Substrate is bound by residues Ser124 and Tyr149. Catalysis depends on Tyr149, which acts as the Proton acceptor. Residues Asn179, 199–200 (NL), 216–218 (AVF), Arg231, 292–295 (RDGD), and Tyr299 each bind substrate.

Belongs to the NAD(P)-dependent epimerase/dehydratase family. As to quaternary structure, homodimer. The cofactor is NAD(+).

The enzyme catalyses UDP-alpha-D-glucose = UDP-alpha-D-galactose. It participates in carbohydrate metabolism; galactose metabolism. Functionally, involved in the metabolism of galactose. Catalyzes the conversion of UDP-galactose (UDP-Gal) to UDP-glucose (UDP-Glc) through a mechanism involving the transient reduction of NAD. The polypeptide is UDP-glucose 4-epimerase (galE) (Salmonella typhi).